We begin with the raw amino-acid sequence, 543 residues long: Probable malate:quinone oxidoreductase (543 aa).

The protein belongs to the MQO family. It depends on FAD as a cofactor.

The catalysed reaction is (S)-malate + a quinone = a quinol + oxaloacetate. It participates in carbohydrate metabolism; tricarboxylic acid cycle; oxaloacetate from (S)-malate (quinone route): step 1/1. The protein is Probable malate:quinone oxidoreductase of Acinetobacter baylyi (strain ATCC 33305 / BD413 / ADP1).